The sequence spans 62 residues: Large ribosomal subunit protein bL33 (62 aa).

Belongs to the bacterial ribosomal protein bL33 family.

This Trichodesmium erythraeum (strain IMS101) protein is Large ribosomal subunit protein bL33.